The primary structure comprises 607 residues: MPTYRSRTTTEGRNMAGARALWRATGMTDGDFQKPIIAVVNSFTQFVPGHVHLKDLGQLVAGEIAAAGGVAKEFNTIAVDDGIAMGHDGMLYSLPSREIIADSVEYMVNAHCADAMVCISNCDKITPGMLMAALRLNIPTVFVSGGPMEAGKVKLGDGEHALDLVDAMVMAADDSVSEEDIELVERSACPTCGSCSGMFTANSMNCLTEALGLSLPGNGSVLATHSDRQNLFKRAGHLIVDLAKRYYEGDDESVLPRSVATYDAFENAMTLDISMGGSTNTVLHLLAAAHEAGVDFTMQDIDQLSRRVPVLCKVAPAKNDVHMEDVHRAGGIMGILGELDRAGLLKTDVSTVHAPSMSAALNEWDVVRNENHHEFYRAAPGGIPTVFAFSQSRRYRELDTDREAGVIRSAEHAFSQDGGLAVLYGNLAEDGCIVKTAGVDESILKFSGPARVFESQDASVDAILSGEVKEGEVVLIRYEGPRGGPGMQEMLYPTSYLKSKGLGKACALVTDGRFSGGSSGLSIGHVSPEAAEGGTIGLVETGDLIEIDIPNRTIHLAVPDAELAARRQKREEEGWHPAEPRPRKITAALRAYASMTTSASRGAVRNI.

A Mg(2+)-binding site is contributed by D81. Residue C122 coordinates [2Fe-2S] cluster. Mg(2+) contacts are provided by D123 and K124. Residue K124 is modified to N6-carboxylysine. C195 lines the [2Fe-2S] cluster pocket. E489 provides a ligand contact to Mg(2+). The active-site Proton acceptor is the S515.

It belongs to the IlvD/Edd family. In terms of assembly, homodimer. [2Fe-2S] cluster is required as a cofactor. Mg(2+) serves as cofactor.

It catalyses the reaction (2R)-2,3-dihydroxy-3-methylbutanoate = 3-methyl-2-oxobutanoate + H2O. The catalysed reaction is (2R,3R)-2,3-dihydroxy-3-methylpentanoate = (S)-3-methyl-2-oxopentanoate + H2O. The protein operates within amino-acid biosynthesis; L-isoleucine biosynthesis; L-isoleucine from 2-oxobutanoate: step 3/4. It participates in amino-acid biosynthesis; L-valine biosynthesis; L-valine from pyruvate: step 3/4. Functionally, functions in the biosynthesis of branched-chain amino acids. Catalyzes the dehydration of (2R,3R)-2,3-dihydroxy-3-methylpentanoate (2,3-dihydroxy-3-methylvalerate) into 2-oxo-3-methylpentanoate (2-oxo-3-methylvalerate) and of (2R)-2,3-dihydroxy-3-methylbutanoate (2,3-dihydroxyisovalerate) into 2-oxo-3-methylbutanoate (2-oxoisovalerate), the penultimate precursor to L-isoleucine and L-valine, respectively. This chain is Dihydroxy-acid dehydratase, found in Deinococcus radiodurans (strain ATCC 13939 / DSM 20539 / JCM 16871 / CCUG 27074 / LMG 4051 / NBRC 15346 / NCIMB 9279 / VKM B-1422 / R1).